The sequence spans 1048 residues: Ceruloplasmin (1048 aa).

An N-terminal signal peptide occupies residues 1–19; it reads MKIFLLCIFLILCGTSVWA. 3 Plastocyanin-like domains span residues 20-200, 209-357, and 370-554; these read KDKH…LIHC, KEKN…VQDC, and NVRH…MKIC. Na(+) contacts are provided by Y55, G64, and Y67. Cu(2+) contacts are provided by H120 and H122. Residue H120 coordinates O2. K128 serves as a coordination point for Ca(2+). A glycan (N-linked (GlcNAc...) asparagine) is linked at N138. 3 residues coordinate Ca(2+): Q143, D146, and D147. Cysteines 174 and 200 form a disulfide. Residues H180 and H182 each coordinate Cu(2+). H180 is a binding site for O2. A glycan (N-linked (GlcNAc...) asparagine) is linked at N227. S256 provides a ligand contact to Na(+). The cysteines at positions 276 and 357 are disulfide-linked. Cu(2+) is bound by residues H295, C338, and H343. Positions 408, 417, and 420 each coordinate Na(+). A disulfide bridge connects residues C530 and C554. N-linked (GlcNAc...) asparagine glycans are attached at residues N556 and N582. One can recognise a Plastocyanin-like 4 domain in the interval 564–712; sequence RLKNVDKEFY…MKQKYTVSQC (149 aa). A Na(+)-binding site is contributed by S611. Cysteines 631 and 712 form a disulfide. 4 residues coordinate Cu(2+): H650, C693, H698, and M703. Catalysis depends on C693, which acts as the Nucleophile; for glutathione peroxidase activity. Position 716 is a phosphoserine (S716). Plastocyanin-like domains are found at residues 724 to 894 and 902 to 1044; these read GERT…LIVC and SNPI…PNEE. N756 carries an N-linked (GlcNAc...) asparagine glycan. Na(+)-binding residues include F761, G770, and Y773. A disulfide bond links C868 and C894. N920 carries an N-linked (GlcNAc...) asparagine glycan. Position 949 (S949) interacts with Na(+). Positions 977, 980, 982, 1022, 1023, 1024, 1028, and 1033 each coordinate Cu(2+). 2 residues coordinate O2: H980 and H982. Residue H1024 coordinates O2.

It belongs to the multicopper oxidase family. In terms of assembly, found in a complex with MPO and LTF; interacts directly with MPO and LTF, which allows Fe(3+) incorporation into LTF, activation of CP ferroxidase activity and protection of CP antioxidant properties by MPO. It depends on Cu(2+) as a cofactor. As to expression, expressed by the liver and secreted in plasma. Also expressed in the hypothalamus, spleen and uterus. No expression in the cortex, heart, intestine or kidney.

It is found in the secreted. It catalyses the reaction 4 Fe(2+) + O2 + 4 H(+) = 4 Fe(3+) + 2 H2O. It carries out the reaction 4 Cu(+) + O2 + 4 H(+) = 4 Cu(2+) + 2 H2O. The enzyme catalyses a hydroperoxide + 2 glutathione = an alcohol + glutathione disulfide + H2O. The catalysed reaction is 4 nitric oxide + O2 + 2 H2O = 4 nitrite + 4 H(+). It catalyses the reaction 2 glutathione + H2O2 = glutathione disulfide + 2 H2O. In terms of biological role, multifunctional blue, copper-binding (6-7 atoms per molecule) glycoprotein. It has ferroxidase activity oxidizing Fe(2+) to Fe(3+) without releasing radical oxygen species. It is involved in iron transport across the cell membrane. Copper ions provide a large number of enzymatic activites. Oxidizes highly toxic ferrous ions to the ferric state for further incorporation onto apo-transferrins, catalyzes Cu(+) oxidation and promotes the oxidation of biogenic amines such as norepinephrin and serotonin. Provides Cu(2+) ions for the ascorbate-mediated deaminase degradation of the heparan sulfate chains of GPC1. Has glutathione peroxidase-like activity, can remove both hydrogen peroxide and lipid hydroperoxide in the presence of thiols. Also shows NO-oxidase and NO2 synthase activities that determine endocrine NO homeostasis. This chain is Ceruloplasmin (CP), found in Ovis aries (Sheep).